The sequence spans 376 residues: Chaperone protein DnaJ (376 aa).

The 66-residue stretch at 5 to 70 (DYYEVLGVAK…QKRAAYDQYG (66 aa)) folds into the J domain. The CR-type zinc-finger motif lies at 136–214 (GYDTQIRVPS…CHGSGKVKET (79 aa)). Zn(2+) contacts are provided by cysteine 149, cysteine 152, cysteine 166, cysteine 169, cysteine 188, cysteine 191, cysteine 202, and cysteine 205. 4 CXXCXGXG motif repeats span residues 149-156 (CGVCHGSG), 166-173 (CPTCHGQG), 188-195 (CPKCHGTG), and 202-209 (CVHCHGSG).

It belongs to the DnaJ family. In terms of assembly, homodimer. Zn(2+) is required as a cofactor.

Its subcellular location is the cytoplasm. Functionally, participates actively in the response to hyperosmotic and heat shock by preventing the aggregation of stress-denatured proteins and by disaggregating proteins, also in an autonomous, DnaK-independent fashion. Unfolded proteins bind initially to DnaJ; upon interaction with the DnaJ-bound protein, DnaK hydrolyzes its bound ATP, resulting in the formation of a stable complex. GrpE releases ADP from DnaK; ATP binding to DnaK triggers the release of the substrate protein, thus completing the reaction cycle. Several rounds of ATP-dependent interactions between DnaJ, DnaK and GrpE are required for fully efficient folding. Also involved, together with DnaK and GrpE, in the DNA replication of plasmids through activation of initiation proteins. This is Chaperone protein DnaJ from Burkholderia pseudomallei (strain 1710b).